A 144-amino-acid polypeptide reads, in one-letter code: Large ribosomal subunit protein uL15 (144 aa).

The segment at 1-49 (MRLNTLSPAAGAKSAAKRVGRGIGSGTGKTCGRGHKGQKSRSGGGVRVG) is disordered. The segment covering 21–31 (RGIGSGTGKTC) has biased composition (gly residues).

It belongs to the universal ribosomal protein uL15 family. Part of the 50S ribosomal subunit.

Functionally, binds to the 23S rRNA. The sequence is that of Large ribosomal subunit protein uL15 from Shewanella halifaxensis (strain HAW-EB4).